The primary structure comprises 298 residues: UPF0696 protein C11orf68 homolog (298 aa).

Residues M1–G10 show a composition bias toward low complexity. A disordered region spans residues M1–G66. Residues A11–A25 are compositionally biased toward gly residues. The segment covering E41 to P50 has biased composition (basic and acidic residues).

Belongs to the UPF0696 family.

This is UPF0696 protein C11orf68 homolog (Bles03) from Mus musculus (Mouse).